The following is a 478-amino-acid chain: Protein nucleotidyltransferase YdiU (478 aa).

ATP contacts are provided by Gly84, Gly86, Arg87, Lys107, Asp119, Gly120, Arg170, and Arg177. Asp246 (proton acceptor) is an active-site residue. Mg(2+) contacts are provided by Asn247 and Asp256. Asp256 provides a ligand contact to ATP.

The protein belongs to the SELO family. The cofactor is Mg(2+). Mn(2+) is required as a cofactor.

It catalyses the reaction L-seryl-[protein] + ATP = 3-O-(5'-adenylyl)-L-seryl-[protein] + diphosphate. The enzyme catalyses L-threonyl-[protein] + ATP = 3-O-(5'-adenylyl)-L-threonyl-[protein] + diphosphate. The catalysed reaction is L-tyrosyl-[protein] + ATP = O-(5'-adenylyl)-L-tyrosyl-[protein] + diphosphate. It carries out the reaction L-histidyl-[protein] + UTP = N(tele)-(5'-uridylyl)-L-histidyl-[protein] + diphosphate. It catalyses the reaction L-seryl-[protein] + UTP = O-(5'-uridylyl)-L-seryl-[protein] + diphosphate. The enzyme catalyses L-tyrosyl-[protein] + UTP = O-(5'-uridylyl)-L-tyrosyl-[protein] + diphosphate. Functionally, nucleotidyltransferase involved in the post-translational modification of proteins. It can catalyze the addition of adenosine monophosphate (AMP) or uridine monophosphate (UMP) to a protein, resulting in modifications known as AMPylation and UMPylation. This is Protein nucleotidyltransferase YdiU from Escherichia coli O9:H4 (strain HS).